The primary structure comprises 299 residues: GTP cyclohydrolase FolE2 (299 aa).

The protein belongs to the GTP cyclohydrolase IV family.

The catalysed reaction is GTP + H2O = 7,8-dihydroneopterin 3'-triphosphate + formate + H(+). It functions in the pathway cofactor biosynthesis; 7,8-dihydroneopterin triphosphate biosynthesis; 7,8-dihydroneopterin triphosphate from GTP: step 1/1. Functionally, converts GTP to 7,8-dihydroneopterin triphosphate. The protein is GTP cyclohydrolase FolE2 of Citrobacter koseri (strain ATCC BAA-895 / CDC 4225-83 / SGSC4696).